The sequence spans 36 residues: Pancreatic polypeptide (36 aa).

Residue tyrosine 36 is modified to Tyrosine amide.

Belongs to the NPY family.

It is found in the secreted. In terms of biological role, hormone secreted by pancreatic cells that acts as a regulator of pancreatic and gastrointestinal functions probably by signaling through the G protein-coupled receptor NPY4R2. This is Pancreatic polypeptide (PPY) from Chinchilla chinchilla (Short-tailed chinchilla).